The chain runs to 164 residues: Cyclic pyranopterin monophosphate synthase (164 aa).

Residues 75–77 (MCH) and 116–117 (ME) each bind substrate. Residue D131 is part of the active site.

This sequence belongs to the MoaC family. Homohexamer; trimer of dimers.

The catalysed reaction is (8S)-3',8-cyclo-7,8-dihydroguanosine 5'-triphosphate = cyclic pyranopterin phosphate + diphosphate. It functions in the pathway cofactor biosynthesis; molybdopterin biosynthesis. Catalyzes the conversion of (8S)-3',8-cyclo-7,8-dihydroguanosine 5'-triphosphate to cyclic pyranopterin monophosphate (cPMP). The polypeptide is Cyclic pyranopterin monophosphate synthase (Staphylococcus aureus (strain bovine RF122 / ET3-1)).